The following is a 181-amino-acid chain: Inner membrane-spanning protein YciB (181 aa).

5 consecutive transmembrane segments (helical) span residues 10–30 (LIIFFAVYKFFDIYIASGALI), 50–70 (MHLITFAMVTVFGTLTLVFHD), 72–92 (AFIKWKVTIIYALFALALGVS), 118–138 (VTWYWVSFFAICGLVNIYVAF), and 148–168 (FKVFGLTALTLINTVITVFYL).

Belongs to the YciB family.

The protein resides in the cell inner membrane. Its function is as follows. Plays a role in cell envelope biogenesis, maintenance of cell envelope integrity and membrane homeostasis. The protein is Inner membrane-spanning protein YciB of Shewanella sp. (strain MR-4).